Here is a 255-residue protein sequence, read N- to C-terminus: Phosphoribosylformylglycinamidine synthase subunit PurQ (255 aa).

Residues 6–255 (TLILRTPGTN…TNAVKWARQV (250 aa)) enclose the Glutamine amidotransferase type-1 domain. Cys96 acts as the Nucleophile in catalysis. Residues His217 and Glu219 contribute to the active site.

In terms of assembly, part of the FGAM synthase complex composed of 1 PurL, 1 PurQ and 2 PurS subunits.

It localises to the cytoplasm. The catalysed reaction is N(2)-formyl-N(1)-(5-phospho-beta-D-ribosyl)glycinamide + L-glutamine + ATP + H2O = 2-formamido-N(1)-(5-O-phospho-beta-D-ribosyl)acetamidine + L-glutamate + ADP + phosphate + H(+). It carries out the reaction L-glutamine + H2O = L-glutamate + NH4(+). It functions in the pathway purine metabolism; IMP biosynthesis via de novo pathway; 5-amino-1-(5-phospho-D-ribosyl)imidazole from N(2)-formyl-N(1)-(5-phospho-D-ribosyl)glycinamide: step 1/2. In terms of biological role, part of the phosphoribosylformylglycinamidine synthase complex involved in the purines biosynthetic pathway. Catalyzes the ATP-dependent conversion of formylglycinamide ribonucleotide (FGAR) and glutamine to yield formylglycinamidine ribonucleotide (FGAM) and glutamate. The FGAM synthase complex is composed of three subunits. PurQ produces an ammonia molecule by converting glutamine to glutamate. PurL transfers the ammonia molecule to FGAR to form FGAM in an ATP-dependent manner. PurS interacts with PurQ and PurL and is thought to assist in the transfer of the ammonia molecule from PurQ to PurL. The protein is Phosphoribosylformylglycinamidine synthase subunit PurQ of Dehalococcoides mccartyi (strain ATCC BAA-2266 / KCTC 15142 / 195) (Dehalococcoides ethenogenes (strain 195)).